Reading from the N-terminus, the 202-residue chain is Orotate phosphoribosyltransferase (202 aa).

113-121 (EDIITTGGS) is a binding site for 5-phospho-alpha-D-ribose 1-diphosphate. The orotate site is built by T117 and R145.

This sequence belongs to the purine/pyrimidine phosphoribosyltransferase family. PyrE subfamily. As to quaternary structure, homodimer. Mg(2+) serves as cofactor.

It carries out the reaction orotidine 5'-phosphate + diphosphate = orotate + 5-phospho-alpha-D-ribose 1-diphosphate. It participates in pyrimidine metabolism; UMP biosynthesis via de novo pathway; UMP from orotate: step 1/2. Catalyzes the transfer of a ribosyl phosphate group from 5-phosphoribose 1-diphosphate to orotate, leading to the formation of orotidine monophosphate (OMP). This is Orotate phosphoribosyltransferase from Nitratiruptor sp. (strain SB155-2).